Here is a 257-residue protein sequence, read N- to C-terminus: Snake venom serine protease KN10 (257 aa).

An N-terminal signal peptide occupies residues 1-18 (MVLIRVLANLLILQLSYA). A propeptide spanning residues 19-24 (QKSSEL) is cleaved from the precursor. The Peptidase S1 domain occupies 25–248 (VVGGDECNIN…HLDWIKSIIA (224 aa)). Intrachain disulfides connect Cys-31-Cys-162, Cys-49-Cys-65, Cys-141-Cys-209, Cys-173-Cys-188, and Cys-199-Cys-224. The active-site Charge relay system is the His-64. The N-linked (GlcNAc...) asparagine glycan is linked to Asn-102. The active-site Charge relay system is Asp-109. Asn-120 and Asn-121 each carry an N-linked (GlcNAc...) asparagine glycan. Catalysis depends on Ser-203, which acts as the Charge relay system.

It belongs to the peptidase S1 family. Snake venom subfamily. In terms of assembly, monomer. In terms of tissue distribution, expressed by the venom gland.

It is found in the secreted. Functionally, snake venom serine protease that may act in the hemostasis system of the prey. In Trimeresurus stejnegeri (Chinese green tree viper), this protein is Snake venom serine protease KN10.